A 232-amino-acid polypeptide reads, in one-letter code: F420-dependent NADP reductase (232 aa).

NADP(+)-binding positions include 15 to 18 (TGDQ), 37 to 38 (SR), K42, V80, V106, and A151.

It belongs to the F420-dependent NADP reductase family. Homotetramer.

The enzyme catalyses reduced coenzyme F420-(gamma-L-Glu)(n) + NADP(+) = oxidized coenzyme F420-(gamma-L-Glu)(n) + NADPH + 2 H(+). Catalyzes the reduction of NADP(+) with F420H(2) via hydride transfer, and likely the reverse reaction, i.e. the reduction of F420 with NADPH. Probably functions in the regeneration of NADPH required in biosynthetic reactions. Is specific for reduced F420 as electron donor for the reduction of NADP; neither reduced FAD nor FMN can act as electron donor. The enzyme is also specific for NADP; NAD is not utilized as substrate. This Methanothermobacter thermautotrophicus (strain ATCC 29096 / DSM 1053 / JCM 10044 / NBRC 100330 / Delta H) (Methanobacterium thermoautotrophicum) protein is F420-dependent NADP reductase (fno).